Here is a 270-residue protein sequence, read N- to C-terminus: Phospholysine phosphohistidine inorganic pyrophosphate phosphatase (270 aa).

Mg(2+) is bound by residues aspartate 17 and serine 19. Residues aspartate 17–serine 19, threonine 54–asparagine 55, and lysine 189 each bind substrate. Aspartate 214 is a Mg(2+) binding site.

The protein belongs to the HAD-like hydrolase superfamily. Homodimer. The cofactor is Mg(2+).

Its subcellular location is the cytoplasm. It is found in the nucleus. The catalysed reaction is diphosphate + H2O = 2 phosphate + H(+). Phosphatase that hydrolyzes imidodiphosphate, 3-phosphohistidine and 6-phospholysine. Has broad substrate specificity and can also hydrolyze inorganic diphosphate, but with lower efficiency. The protein is Phospholysine phosphohistidine inorganic pyrophosphate phosphatase (Lhpp) of Rattus norvegicus (Rat).